Consider the following 331-residue polypeptide: DNA-directed RNA polymerase subunit alpha (331 aa).

An alpha N-terminal domain (alpha-NTD) region spans residues 1–233 (MVREKVTVST…DLFIPFLHAE (233 aa)). The segment at 265–331 (KEIELKYIFI…GILEKHFTID (67 aa)) is alpha C-terminal domain (alpha-CTD).

Belongs to the RNA polymerase alpha chain family. In terms of assembly, in plastids the minimal PEP RNA polymerase catalytic core is composed of four subunits: alpha, beta, beta', and beta''. When a (nuclear-encoded) sigma factor is associated with the core the holoenzyme is formed, which can initiate transcription.

It localises to the plastid. The protein resides in the chloroplast. The catalysed reaction is RNA(n) + a ribonucleoside 5'-triphosphate = RNA(n+1) + diphosphate. DNA-dependent RNA polymerase catalyzes the transcription of DNA into RNA using the four ribonucleoside triphosphates as substrates. The sequence is that of DNA-directed RNA polymerase subunit alpha from Vitis vinifera (Grape).